Consider the following 132-residue polypeptide: Small ribosomal subunit protein eS12 (132 aa).

This sequence belongs to the eukaryotic ribosomal protein eS12 family.

It localises to the cytoplasm. The chain is Small ribosomal subunit protein eS12 (rps12) from Xenopus laevis (African clawed frog).